A 479-amino-acid chain; its full sequence is Cardiolipin synthase A (479 aa).

2 helical membrane passes run F8 to V28 and I38 to F58. 2 consecutive PLD phosphodiesterase domains span residues V218–Y245 and Q392–S419. Active-site residues include H223, K225, D230, H397, K399, and D404.

Belongs to the phospholipase D family. Cardiolipin synthase subfamily. ClsA sub-subfamily.

The protein resides in the cell inner membrane. It catalyses the reaction 2 a 1,2-diacyl-sn-glycero-3-phospho-(1'-sn-glycerol) = a cardiolipin + glycerol. In terms of biological role, catalyzes the reversible phosphatidyl group transfer from one phosphatidylglycerol molecule to another to form cardiolipin (CL) (diphosphatidylglycerol) and glycerol. The polypeptide is Cardiolipin synthase A (Pseudomonas putida (strain W619)).